Reading from the N-terminus, the 459-residue chain is UDP-N-acetylmuramoyl-tripeptide--D-alanyl-D-alanine ligase (459 aa).

121 to 127 (GSSGKTT) provides a ligand contact to ATP.

The protein belongs to the MurCDEF family. MurF subfamily.

It localises to the cytoplasm. It catalyses the reaction D-alanyl-D-alanine + UDP-N-acetyl-alpha-D-muramoyl-L-alanyl-gamma-D-glutamyl-meso-2,6-diaminopimelate + ATP = UDP-N-acetyl-alpha-D-muramoyl-L-alanyl-gamma-D-glutamyl-meso-2,6-diaminopimeloyl-D-alanyl-D-alanine + ADP + phosphate + H(+). It functions in the pathway cell wall biogenesis; peptidoglycan biosynthesis. Functionally, involved in cell wall formation. Catalyzes the final step in the synthesis of UDP-N-acetylmuramoyl-pentapeptide, the precursor of murein. This is UDP-N-acetylmuramoyl-tripeptide--D-alanyl-D-alanine ligase from Treponema pallidum (strain Nichols).